We begin with the raw amino-acid sequence, 402 residues long: MKRLWQHCHAATLKGGKYSIVEDAALVTDGPLIHWIGPRAELPPGDYAERIDLGGAWLTPGLIDCHTHAVFGGNRSGEFEQRLEGVSYAVIAAAGGGIASTVRATREASEEELLASARKRLEPLLRDGVTALEIKSGYGLDLASERKMLRVIRRLGERLPATVRSTCLAAHALPPEYAGRADDYIEHICSTMLPALAGEGLVDAVDAFCEHLAFSPAQVERVFIAARELGLPVKLHAEQLSSLHGSSLAARYRALSADHLEYMTEDDARAMGEAGTVAVLLPGAFYLLRETQLPPIDALRRHGVAMAIASDLNPGTSPALSLRLMLNMACTLFRLTPEETLAGVTLHAARALGLEASHGSLEVGKLADFVAWDIERPAELAYWLGGDLPKRVIRHAEEVYRG.

Residues H66 and H68 each coordinate Fe(3+). Residues H66 and H68 each coordinate Zn(2+). Residues R75, Y138, and H171 each coordinate 4-imidazolone-5-propanoate. Y138 is an N-formimidoyl-L-glutamate binding site. H236 lines the Fe(3+) pocket. Position 236 (H236) interacts with Zn(2+). Q239 lines the 4-imidazolone-5-propanoate pocket. D311 is a Fe(3+) binding site. D311 is a binding site for Zn(2+). 2 residues coordinate N-formimidoyl-L-glutamate: N313 and G315. 4-imidazolone-5-propanoate is bound at residue T316.

The protein belongs to the metallo-dependent hydrolases superfamily. HutI family. Requires Zn(2+) as cofactor. It depends on Fe(3+) as a cofactor.

It is found in the cytoplasm. It catalyses the reaction 4-imidazolone-5-propanoate + H2O = N-formimidoyl-L-glutamate. Its pathway is amino-acid degradation; L-histidine degradation into L-glutamate; N-formimidoyl-L-glutamate from L-histidine: step 3/3. Its function is as follows. Catalyzes the hydrolytic cleavage of the carbon-nitrogen bond in imidazolone-5-propanoate to yield N-formimidoyl-L-glutamate. It is the third step in the universal histidine degradation pathway. The sequence is that of Imidazolonepropionase from Pseudomonas aeruginosa (strain LESB58).